The primary structure comprises 632 residues: Phosphomethylpyrimidine synthase (632 aa).

A compositionally biased stretch (polar residues) spans 1-23; the sequence is MNIRSNPQQTVPAVTTGPLSSSR. Residues 1-26 form a disordered region; it reads MNIRSNPQQTVPAVTTGPLSSSRKIF. Substrate is bound by residues N221, M250, Y279, H315, 335–337, 376–379, and E415; these read SRG and DGLR. A Zn(2+)-binding site is contributed by H419. Y442 lines the substrate pocket. Position 483 (H483) interacts with Zn(2+). C563, C566, and C571 together coordinate [4Fe-4S] cluster.

The protein belongs to the ThiC family. Homodimer. Requires [4Fe-4S] cluster as cofactor.

It catalyses the reaction 5-amino-1-(5-phospho-beta-D-ribosyl)imidazole + S-adenosyl-L-methionine = 4-amino-2-methyl-5-(phosphooxymethyl)pyrimidine + CO + 5'-deoxyadenosine + formate + L-methionine + 3 H(+). It participates in cofactor biosynthesis; thiamine diphosphate biosynthesis. In terms of biological role, catalyzes the synthesis of the hydroxymethylpyrimidine phosphate (HMP-P) moiety of thiamine from aminoimidazole ribotide (AIR) in a radical S-adenosyl-L-methionine (SAM)-dependent reaction. The protein is Phosphomethylpyrimidine synthase of Bradyrhizobium diazoefficiens (strain JCM 10833 / BCRC 13528 / IAM 13628 / NBRC 14792 / USDA 110).